A 191-amino-acid polypeptide reads, in one-letter code: Small ribosomal subunit protein uS9c (191 aa).

The disordered stretch occupies residues 166–191 (TQDSRVKERRKYGLKKARKASQYHKR). The segment covering 172–191 (KERRKYGLKKARKASQYHKR) has biased composition (basic residues).

Belongs to the universal ribosomal protein uS9 family.

It localises to the plastid. The protein resides in the chloroplast. The polypeptide is Small ribosomal subunit protein uS9c (rps9) (Chlamydomonas reinhardtii (Chlamydomonas smithii)).